The primary structure comprises 461 residues: Eukaryotic translation initiation factor 3 subunit M (461 aa).

The interval 42–61 (LLEPLRQQEQSDAEPDRKQR) is disordered. The 172-residue stretch at 205-376 (DQELAQTHVV…SEFLVHRATY (172 aa)) folds into the PCI domain. The tract at residues 422–461 (AAEEAAQGKSGDKKGDRRQRRDQPQQSQPAPEAATAVAAE) is disordered. The span at 431 to 444 (SGDKKGDRRQRRDQ) shows a compositional bias: basic and acidic residues. Residues 445–461 (PQQSQPAPEAATAVAAE) are compositionally biased toward low complexity.

This sequence belongs to the eIF-3 subunit M family. In terms of assembly, component of the eukaryotic translation initiation factor 3 (eIF-3) complex.

The protein localises to the cytoplasm. Its function is as follows. Component of the eukaryotic translation initiation factor 3 (eIF-3) complex, which is involved in protein synthesis of a specialized repertoire of mRNAs and, together with other initiation factors, stimulates binding of mRNA and methionyl-tRNAi to the 40S ribosome. The eIF-3 complex specifically targets and initiates translation of a subset of mRNAs involved in cell proliferation. The polypeptide is Eukaryotic translation initiation factor 3 subunit M (Aspergillus terreus (strain NIH 2624 / FGSC A1156)).